We begin with the raw amino-acid sequence, 580 residues long: Glutamine--tRNA ligase (580 aa).

The 'HIGH' region motif lies at 41–51; that stretch reads PEPNGYLHIGH. Residues 42 to 44 and 48 to 54 each bind ATP; these read EPN and HIGHAKA. Residues Asp-74 and Tyr-218 each contribute to the L-glutamine site. ATP contacts are provided by residues Thr-237, 285-286, and 293-295; these read RL and MSK. Residues 292-296 carry the 'KMSKS' region motif; it reads VMSKR.

Belongs to the class-I aminoacyl-tRNA synthetase family. Monomer.

Its subcellular location is the cytoplasm. It catalyses the reaction tRNA(Gln) + L-glutamine + ATP = L-glutaminyl-tRNA(Gln) + AMP + diphosphate. The polypeptide is Glutamine--tRNA ligase (Xylella fastidiosa (strain M12)).